Consider the following 388-residue polypeptide: ATP phosphoribosyltransferase regulatory subunit (388 aa).

It belongs to the class-II aminoacyl-tRNA synthetase family. HisZ subfamily. As to quaternary structure, heteromultimer composed of HisG and HisZ subunits.

The protein resides in the cytoplasm. Its pathway is amino-acid biosynthesis; L-histidine biosynthesis; L-histidine from 5-phospho-alpha-D-ribose 1-diphosphate: step 1/9. In terms of biological role, required for the first step of histidine biosynthesis. May allow the feedback regulation of ATP phosphoribosyltransferase activity by histidine. This is ATP phosphoribosyltransferase regulatory subunit from Acinetobacter baumannii (strain SDF).